The sequence spans 318 residues: MTCKIIGCGGYLPSKIVSNDELAKFVDTNDEWIRTRTGITQRHIAGDTEYTSHLALKSAEKAIADAGISVNDIDLIITCTTTPDNSFPSVASKLQGYLGLTNIPSFDLQAVCAGFVYGLQVANSLISSDKYKTILLIGAEKMTSLLDWNDRTTCVLFGDGAGSVILQRSSDDSGLIDSNIFSSGADYDEILYTNGGVSMNGISGKIVMQGQKLFRHAIEKMQQSIKDLLHANQFSVSDIDYFIPHQANIRIINKLAELLNIEEHKVVKTVDKHANCSAASIPLALSTLKASGKIKKGDILLFSAIGAGLTWGSAFIRW.

Catalysis depends on residues Cys112 and His245. Residues 246-250 (QANIR) form an ACP-binding region. Asn275 is an active-site residue.

Belongs to the thiolase-like superfamily. FabH family. Homodimer.

It is found in the cytoplasm. The catalysed reaction is malonyl-[ACP] + acetyl-CoA + H(+) = 3-oxobutanoyl-[ACP] + CO2 + CoA. It participates in lipid metabolism; fatty acid biosynthesis. Catalyzes the condensation reaction of fatty acid synthesis by the addition to an acyl acceptor of two carbons from malonyl-ACP. Catalyzes the first condensation reaction which initiates fatty acid synthesis and may therefore play a role in governing the total rate of fatty acid production. Possesses both acetoacetyl-ACP synthase and acetyl transacylase activities. Its substrate specificity determines the biosynthesis of branched-chain and/or straight-chain of fatty acids. The sequence is that of Beta-ketoacyl-[acyl-carrier-protein] synthase III from Rickettsia conorii (strain ATCC VR-613 / Malish 7).